We begin with the raw amino-acid sequence, 119 residues long: Acidic phospholipase A2 2 (119 aa).

Cystine bridges form between C11–C71, C26–C118, C28–C44, C43–C99, C50–C92, C60–C85, and C78–C90. Residues Y27, G29, and G31 each contribute to the Ca(2+) site. H47 is an active-site residue. D48 contributes to the Ca(2+) binding site. The active site involves D93.

Belongs to the phospholipase A2 family. Group I subfamily. D49 sub-subfamily. As to quaternary structure, homotrimer. The cofactor is Ca(2+). Expressed by the venom gland.

The protein resides in the secreted. The catalysed reaction is a 1,2-diacyl-sn-glycero-3-phosphocholine + H2O = a 1-acyl-sn-glycero-3-phosphocholine + a fatty acid + H(+). Functionally, PLA2 catalyzes the calcium-dependent hydrolysis of the 2-acyl groups in 3-sn-phosphoglycerides. The protein is Acidic phospholipase A2 2 of Naja naja (Indian cobra).